The primary structure comprises 234 residues: Phosphoribosylformylglycinamidine synthase subunit PurQ (234 aa).

In terms of domain architecture, Glutamine amidotransferase type-1 spans 6–234; it reads VGVVVFPGSN…ESLFRSLTGV (229 aa). Residue cysteine 89 is the Nucleophile of the active site. Active-site residues include histidine 206 and glutamate 208.

As to quaternary structure, part of the FGAM synthase complex composed of 1 PurL, 1 PurQ and 2 PurS subunits.

Its subcellular location is the cytoplasm. It carries out the reaction N(2)-formyl-N(1)-(5-phospho-beta-D-ribosyl)glycinamide + L-glutamine + ATP + H2O = 2-formamido-N(1)-(5-O-phospho-beta-D-ribosyl)acetamidine + L-glutamate + ADP + phosphate + H(+). The catalysed reaction is L-glutamine + H2O = L-glutamate + NH4(+). It participates in purine metabolism; IMP biosynthesis via de novo pathway; 5-amino-1-(5-phospho-D-ribosyl)imidazole from N(2)-formyl-N(1)-(5-phospho-D-ribosyl)glycinamide: step 1/2. In terms of biological role, part of the phosphoribosylformylglycinamidine synthase complex involved in the purines biosynthetic pathway. Catalyzes the ATP-dependent conversion of formylglycinamide ribonucleotide (FGAR) and glutamine to yield formylglycinamidine ribonucleotide (FGAM) and glutamate. The FGAM synthase complex is composed of three subunits. PurQ produces an ammonia molecule by converting glutamine to glutamate. PurL transfers the ammonia molecule to FGAR to form FGAM in an ATP-dependent manner. PurS interacts with PurQ and PurL and is thought to assist in the transfer of the ammonia molecule from PurQ to PurL. The chain is Phosphoribosylformylglycinamidine synthase subunit PurQ from Chlorobium chlorochromatii (strain CaD3).